A 1076-amino-acid polypeptide reads, in one-letter code: MKSRFSTIDLRAVLAELNASLLGMRVNNVYDVDNKTYLIRLQKPDFKATLLLESGIRIHTTEFEWPKNMMPSSFAMKCRKHLKSRRLVSAKQLGVDRIVDFQFGSDEAAYHLIIELYDRGNIVLTDYEYVILNILRFRTDEADDVKFAVRERYPLDHARAAEPLLTLERLTEIVASAPKGELLKRVLNPLLPYGPALIEHCLLENGFSGNVKVDEKLETKDIEKVLVSLQKAEDYMKTTSNFSGKGYIIQKREIKPSLEADKPVEDILTYEEFHPFLFSQHSQCPYIEFESFDKAVDEFYSKIEGQKIDLKALQQEKQALKKLDNVRKDHENRLEALQQAQEIDKLKGELIEMNLQIVDRAIQVVRSALANQIDWTEIGLIVKEAQAQGDPVASAIKELKLQTNHVTMLLRNPYLLSEEEDDDVDGDVNVEKNETEPPKGKKKKQKNKQLQKPQKNKPLLVDVDLSLSAYANAKKYYDHKRYAAKKTQKTVEAAEKAFKSAEKKTKQTLKEVQTVTSIQKARKVYWFEKFLWFISSENYLIIGGRDQQQNEIIVKRYLTPGDIYVHADLHGATSCVIKNPTGEPIPPRTLTEAGTMALCYSAAWDARVITSAWWVYHHQVSKTAPTGEYLTTGSFMIRGKKNFLPPSYLMMGFSFLFKVDESCVWRHQGERKVRVQDEDMETLASCTSELISEEMEQLDGGDTSSDEDKEEHETPVEVELMTQVDQEDITLQSGRDELNEELIQEESSEDEGEYEEVRKDQDSVGEMKDEGEETLNYPDTTIDLSHLQPQRSIQKLASKEESSNSSDSKSQSRRHLSAKERREMKKKKLPSDSGDLEALEGKDKEKESTVHIETHQNTSKNVAAVQPMKRGQKSKMKKMKEKYKDQDEEDRELIMKLLGSAGSNKEEKGKKGKKGKTKDEPVKKQPQKPRGGQRVSDNIKKETPFLEVITHELQDFAVDDPHDDKEEQDLDQQGNEENLFDSLTGQPHPEDVLLFAIPICAPYTTMTNYKYKVKLTPGVQKKGKAAKTALNSFMHSKEATAREKDLFRSVKDTDLSRNIPGKVKVSAPNLLNVKRK.

Threonine 7 bears the Phosphothreonine mark. Positions 296–359 (VDEFYSKIEG…LIEMNLQIVD (64 aa)) form a coiled coil. Serine 417 is modified (phosphoserine). The interval 420 to 453 (EDDDVDGDVNVEKNETEPPKGKKKKQKNKQLQKP) is disordered. Residues 429–439 (NVEKNETEPPK) are compositionally biased toward basic and acidic residues. The span at 440–449 (GKKKKQKNKQ) shows a compositional bias: basic residues. The stretch at 483–514 (AAKKTQKTVEAAEKAFKSAEKKTKQTLKEVQT) forms a coiled coil. Acidic residues-rich tracts occupy residues 691–710 (ISEE…EDKE) and 742–754 (LIQE…EGEY). Disordered stretches follow at residues 691 to 715 (ISEE…HETP) and 742 to 972 (LIQE…DLDQ). Phosphoserine is present on residues serine 747, serine 748, and serine 763. Positions 755-768 (EEVRKDQDSVGEMK) are enriched in basic and acidic residues. Residues 777-795 (YPDTTIDLSHLQPQRSIQK) show a composition bias toward polar residues. Serine 831 is modified (phosphoserine). The segment covering 839 to 854 (LEGKDKEKESTVHIET) has biased composition (basic and acidic residues). A coiled-coil region spans residues 869 to 894 (KRGQKSKMKKMKEKYKDQDEEDRELI). Positions 870 to 881 (RGQKSKMKKMKE) are enriched in basic residues. The span at 937-965 (DNIKKETPFLEVITHELQDFAVDDPHDDK) shows a compositional bias: basic and acidic residues.

The protein belongs to the NEMF family. Component of the ribosome quality control complex (RQC), composed of the E3 ubiquitin ligase LTN1, TCF25 and NEMF associated with the 60S ribosomal subunit. The complex probably also contains VCP/p97 and its ubiquitin-binding cofactors. Interacts (via its N-terminus) with XPO1. As to expression, expressed in brain, heart, liver, lung, spleen, and skeletal muscle. Also expressed at lower levels in stomach and testis.

It localises to the cytoplasm. It is found in the cytosol. The protein resides in the nucleus. Key component of the ribosome quality control complex (RQC), a ribosome-associated complex that mediates the extraction of incompletely synthesized nascent chains from stalled ribosomes as well as their ubiquitin-mediated proteasomal degradation. Thereby, frees 60S subunit ribosomes from the stalled translation complex and prevents the accumulation of nascent polypeptide chains that are potentially toxic for the cell. Within the RQC complex, NEMF specifically binds stalled 60S ribosomal subunits by recognizing an exposed, nascent chain-conjugated tRNA moiety and promotes the recruitment of LTN1 to stalled 60S subunits. Following binding to stalled 60S ribosomal subunits, NEMF mediates CAT tailing by recruiting alanine-charged tRNA to the A-site and directing the elongation of stalled nascent chains independently of mRNA or 40S subunits, leading to non-templated C-terminal alanine extensions (CAT tails). Mainly recruits alanine-charged tRNAs, but can also other amino acid-charged tRNAs. CAT tailing is required to promote ubiquitination of stalled nascent chains by different E3 ubiquitin-protein ligases. In the canonical RQC pathway (RQC-L), CAT tailing facilitates LTN1-dependent ubiquitination by exposing lysine residues that would otherwise remain buried in the ribosomal exit tunnel. In the alternative RQC pathway (RQC-C) CAT tailing creates an C-degron mainly composed of alanine that is recognized by the CRL2(KLHDC10) and RCHY1/PIRH2 E3 ligases, leading to ubiquitination and degradation of stalled nascent chains. NEMF may also indirectly play a role in nuclear export. The sequence is that of Ribosome quality control complex subunit NEMF from Homo sapiens (Human).